Consider the following 396-residue polypeptide: Non-homologous end joining protein Ku (396 aa).

One can recognise a Ku domain in the interval Ile9–Ser189. A compositionally biased stretch (low complexity) spans Asp278–Val288. Positions Asp278–Ala396 are disordered. The span at Asp294 to Arg312 shows a compositional bias: basic and acidic residues. Polar residues predominate over residues Arg315–Pro336. Residues Ser337–Ala396 are compositionally biased toward low complexity.

Belongs to the prokaryotic Ku family. In terms of assembly, homodimer. Interacts with LigD.

Its function is as follows. With LigD forms a non-homologous end joining (NHEJ) DNA repair enzyme, which repairs dsDNA breaks with reduced fidelity. Binds linear dsDNA with 5'- and 3'- overhangs but not closed circular dsDNA nor ssDNA. Recruits and stimulates the ligase activity of LigD. In Frankia casuarinae (strain DSM 45818 / CECT 9043 / HFP020203 / CcI3), this protein is Non-homologous end joining protein Ku.